A 36-amino-acid chain; its full sequence is Toxin Iob1 (36 aa).

3 disulfide bridges follow: C6–C21, C13–C26, and C20–C33.

The protein resides in the secreted. In terms of biological role, binds reversibly and blocks N-type voltage-gated calcium channels (Cav). This chain is Toxin Iob1, found in Isyndus obscurus (Assassin bug).